The primary structure comprises 447 residues: ATP synthase subunit beta (447 aa).

Position 147 to 154 (147 to 154 (GGAGVGKT)) interacts with ATP.

The protein belongs to the ATPase alpha/beta chains family. In terms of assembly, F-type ATPases have 2 components, CF(1) - the catalytic core - and CF(0) - the membrane proton channel. CF(1) has five subunits: alpha(3), beta(3), gamma(1), delta(1), epsilon(1). CF(0) has three main subunits: a(1), b(2) and c(9-12). The alpha and beta chains form an alternating ring which encloses part of the gamma chain. CF(1) is attached to CF(0) by a central stalk formed by the gamma and epsilon chains, while a peripheral stalk is formed by the delta and b chains.

Its subcellular location is the cell membrane. It catalyses the reaction ATP + H2O + 4 H(+)(in) = ADP + phosphate + 5 H(+)(out). Produces ATP from ADP in the presence of a proton gradient across the membrane. The catalytic sites are hosted primarily by the beta subunits. The sequence is that of ATP synthase subunit beta from Carsonella ruddii (strain PV).